The following is an 80-amino-acid chain: Serine palmitoyltransferase-regulating protein TSC3 (80 aa).

The helical transmembrane segment at 54–74 (FDSFFLHVFFLTIFSLSFFGI) threads the bilayer.

In terms of assembly, interacts with the serine palmitoyltransferase complex LCB1-LCB2. Component of the SPOTS complex, at least composed of LCB1/2 (LCB1 and/or LCB2), ORM1/2 (ORM1 and/or ORM2), SAC1 and TSC3.

The protein resides in the endoplasmic reticulum membrane. Its function is as follows. Stimulates the activity of serine palmitoyltransferase (SPT), and thus plays a role in the biosynthesis of sphingolipids. This is Serine palmitoyltransferase-regulating protein TSC3 (TSC3) from Saccharomyces cerevisiae (strain ATCC 204508 / S288c) (Baker's yeast).